We begin with the raw amino-acid sequence, 308 residues long: Probable GTP 3',8-cyclase (308 aa).

Residues 4-224 (RFGRPLEDLR…QIRKKHFRPR (221 aa)) form the Radical SAM core domain. Arg13 contacts GTP. 3 residues coordinate [4Fe-4S] cluster: Cys20, Cys24, and Cys27. A GTP-binding site is contributed by Lys60. An S-adenosyl-L-methionine-binding site is contributed by Gly64. Thr90 contacts GTP. Ser114 serves as a coordination point for S-adenosyl-L-methionine. Lys151 contributes to the GTP binding site. [4Fe-4S] cluster is bound by residues Cys245 and Cys248. 250–252 (RIR) is a binding site for GTP. Residue Cys262 participates in [4Fe-4S] cluster binding.

Belongs to the radical SAM superfamily. MoaA family. Requires [4Fe-4S] cluster as cofactor.

The enzyme catalyses GTP + AH2 + S-adenosyl-L-methionine = (8S)-3',8-cyclo-7,8-dihydroguanosine 5'-triphosphate + 5'-deoxyadenosine + L-methionine + A + H(+). It functions in the pathway cofactor biosynthesis; molybdopterin biosynthesis. Its function is as follows. Catalyzes the cyclization of GTP to (8S)-3',8-cyclo-7,8-dihydroguanosine 5'-triphosphate. This chain is Probable GTP 3',8-cyclase, found in Saccharolobus islandicus (strain L.S.2.15 / Lassen #1) (Sulfolobus islandicus).